The primary structure comprises 296 residues: MKNEKIVVLYGGDSPEREVSLKSGKAVLDSLISQGYDAVGVDASGKELVAKLLELKPDKCFVALHGEDGENGRVSALLEMLEIKHTSSSMKSSVITMDKMISKEILMHHRMPTPMAKFLTDKLVAEDEISFPVAVKPSSGGSSIATFKVKSIQELKHAYEEASKYGEVMIEQWVTGKEITVAIVNDEVYSSVWIEPQNEFYDYESKYSGKSIYHSPSGLCEQKELEVRQLAKKAYDLLGCSGHARVDFIYDDRGNFYIMEINSSPGMTENSLSPKSAAAEGVDFDSFVKRIIEQAQ.

The ATP-grasp domain occupies 103–293 (KEILMHHRMP…FDSFVKRIIE (191 aa)). 129-180 (ISFPVAVKPSSGGSSIATFKVKSIQELKHAYEEASKYGEVMIEQWVTGKEIT) contributes to the ATP binding site. Mg(2+)-binding residues include Asp-247, Glu-260, and Asn-262.

This sequence belongs to the D-alanine--D-alanine ligase family. The cofactor is Mg(2+). Mn(2+) serves as cofactor.

Its subcellular location is the cytoplasm. It catalyses the reaction 2 D-alanine + ATP = D-alanyl-D-alanine + ADP + phosphate + H(+). Its pathway is cell wall biogenesis; peptidoglycan biosynthesis. In terms of biological role, cell wall formation. This is D-alanine--D-alanine ligase from Francisella tularensis subsp. novicida (strain U112).